The chain runs to 246 residues: Pyridoxine 5'-phosphate synthase (246 aa).

Asn12 contributes to the 3-amino-2-oxopropyl phosphate binding site. Residue Asp14–His15 coordinates 1-deoxy-D-xylulose 5-phosphate. Arg23 serves as a coordination point for 3-amino-2-oxopropyl phosphate. His48 acts as the Proton acceptor in catalysis. The 1-deoxy-D-xylulose 5-phosphate site is built by Arg50 and His55. Glu75 functions as the Proton acceptor in the catalytic mechanism. 1-deoxy-D-xylulose 5-phosphate is bound at residue Thr105. Residue His196 is the Proton donor of the active site. 3-amino-2-oxopropyl phosphate-binding positions include Gly197 and Gly218–His219.

It belongs to the PNP synthase family. In terms of assembly, homooctamer; tetramer of dimers.

It is found in the cytoplasm. The catalysed reaction is 3-amino-2-oxopropyl phosphate + 1-deoxy-D-xylulose 5-phosphate = pyridoxine 5'-phosphate + phosphate + 2 H2O + H(+). The protein operates within cofactor biosynthesis; pyridoxine 5'-phosphate biosynthesis; pyridoxine 5'-phosphate from D-erythrose 4-phosphate: step 5/5. Functionally, catalyzes the complicated ring closure reaction between the two acyclic compounds 1-deoxy-D-xylulose-5-phosphate (DXP) and 3-amino-2-oxopropyl phosphate (1-amino-acetone-3-phosphate or AAP) to form pyridoxine 5'-phosphate (PNP) and inorganic phosphate. The polypeptide is Pyridoxine 5'-phosphate synthase (Pseudomonas syringae pv. tomato (strain ATCC BAA-871 / DC3000)).